The primary structure comprises 122 residues: Large ribosomal subunit protein uL18 (122 aa).

The protein belongs to the universal ribosomal protein uL18 family. In terms of assembly, part of the 50S ribosomal subunit; part of the 5S rRNA/L5/L18/L25 subcomplex. Contacts the 5S and 23S rRNAs.

This is one of the proteins that bind and probably mediate the attachment of the 5S RNA into the large ribosomal subunit, where it forms part of the central protuberance. In Prochlorococcus marinus (strain AS9601), this protein is Large ribosomal subunit protein uL18.